Reading from the N-terminus, the 762-residue chain is cGMP-dependent protein kinase 2 (762 aa).

A disordered region spans residues 1 to 26 (MGNGSVKPKHAKHPDGHSGNLSNEAL). The N-myristoyl glycine moiety is linked to residue glycine 2. A phosphoserine mark is found at serine 110 and serine 117. The segment at 118 to 138 (RRGAKAGVSAEPTTRTYDLNK) is disordered. The segment at 168-283 (FLKRLDPQQI…DEEYRNFLRS (116 aa)) is cGMP-binding, high affinity; cAMP-binding, moderate affinity. 3',5'-cyclic GMP contacts are provided by residues 232–235 (GELA), 242–243 (RT), lysine 347, 356–359 (GEKA), 366–367 (RS), aspartate 412, and arginine 415. Positions 286–416 (LLKNLPEDKL…TLNRDDEKRH (131 aa)) are cGMP-binding, high affinity; cAMP-binding, low affinity. Serine 431 is subject to Phosphoserine. The region spanning 453-711 (LEIIATLGVG…INDIKKHRWL (259 aa)) is the Protein kinase domain. Residues 459–467 (LGVGGFGRV) and lysine 482 contribute to the ATP site. The Proton acceptor role is filled by aspartate 576. Position 609 is a phosphothreonine (threonine 609). Residues 712–762 (NGFNWEGLKARSLPSPLRRELSGPIDHSYFDKYPPEKGVPPDEMSGWDKDF) form the AGC-kinase C-terminal domain. The tract at residues 740–762 (YFDKYPPEKGVPPDEMSGWDKDF) is disordered.

The protein belongs to the protein kinase superfamily. AGC Ser/Thr protein kinase family. cGMP subfamily. As to quaternary structure, interacts with GRIA1/GLUR1. Post-translationally, myristoylation mediates membrane localization.

The protein localises to the apical cell membrane. The protein resides in the cell membrane. It catalyses the reaction L-seryl-[protein] + ATP = O-phospho-L-seryl-[protein] + ADP + H(+). It carries out the reaction L-threonyl-[protein] + ATP = O-phospho-L-threonyl-[protein] + ADP + H(+). With respect to regulation, binding of cGMP results in enzyme activation. Its function is as follows. Crucial regulator of intestinal secretion and bone growth. Phosphorylates and activates CFTR on the plasma membrane. Plays a key role in intestinal secretion by regulating cGMP-dependent translocation of CFTR in jejunum. Acts downstream of NMDAR to activate the plasma membrane accumulation of GRIA1/GLUR1 in synapse and increase synaptic plasticity. Phosphorylates GRIA1/GLUR1 at Ser-863. Acts as a regulator of gene expression and activator of the extracellular signal-regulated kinases MAPK3/ERK1 and MAPK1/ERK2 in mechanically stimulated osteoblasts. Under fluid shear stress, mediates ERK activation and subsequent induction of FOS, FOSL1/FRA1, FOSL2/FRA2 and FOSB that play a key role in the osteoblast anabolic response to mechanical stimulation. The chain is cGMP-dependent protein kinase 2 (Prkg2) from Mus musculus (Mouse).